A 488-amino-acid polypeptide reads, in one-letter code: MLKVRFAPSPTGPLHIGGARSALFNYLLARKEDGVFIVRSEDTDLERSSRESEHNIMEALRWLNIQWDEGIEVGGDNGPYRQTERLALYQEYTDRLLASGDAYYCYCSEEELEQERQDLMAKGETPRYLGKCRHLSAAERQTYEAAGRKPVVRFRVPEGRQILINDRVRGEVVFDSDGIGDYVIVKSDGIPTYNFAVVIDDTTMNITHVIRGEEHLSNTPRQVLIYQALGLPTPEFAHISLILNTEGKKMSKRDGDTAVIDYQAKGYLPEAVVNFIALMGWSPPGEEEFFTLEEMTQAFSLERVSKSPAVFDLNKLNYMNAHYIKQADPERLTDLAVPYLREMGAIPQGTLSEEERAWVTHYVQAIINHLSYMAQVKDFVHYVQGGEAPTPEGEALEILQGEQVPAVLDLFVEKLKSLEAIRVDTVKPLFKQITKETKLGGKQVFMPIRIALTGQMHGPELYDIVPLLGLENVLSRLAGTKALLAGSR.

Positions 8-18 match the 'HIGH' region motif; that stretch reads PSPTGPLHIGG. Zn(2+) is bound by residues cysteine 105, cysteine 107, cysteine 132, and histidine 134. The short motif at 249–253 is the 'KMSKS' region element; the sequence is KMSKR. Lysine 252 is a binding site for ATP.

This sequence belongs to the class-I aminoacyl-tRNA synthetase family. Glutamate--tRNA ligase type 1 subfamily. As to quaternary structure, monomer. Zn(2+) is required as a cofactor.

The protein localises to the cytoplasm. The catalysed reaction is tRNA(Glu) + L-glutamate + ATP = L-glutamyl-tRNA(Glu) + AMP + diphosphate. Catalyzes the attachment of glutamate to tRNA(Glu) in a two-step reaction: glutamate is first activated by ATP to form Glu-AMP and then transferred to the acceptor end of tRNA(Glu). This is Glutamate--tRNA ligase from Desulfitobacterium hafniense (strain Y51).